A 689-amino-acid chain; its full sequence is MKNYGPISSKVTKMLHGADYNPEQWIDMPNIWGEDVRLMKLSHTNVVAVGIFSWTMLEPEEGKFNFEWLDEIMDLMHKNGNYVILATPSGAKPIWMAHKYPETLRVAQNRVRNLYGERHNHCYTSPIYREKIAIIDRLLAERYKDHPALILWHISNEFEGQCYCPLCEEAFRDFLREKYDNDINKLNKAWWTKFWSHTYASFDEIEAPAPHGEPALHGLNLDWMRFVTHQTLDYYKHERSILKEITPDIPVTTNFHDYISLFRGIDYWKFAPYLDVVSWDNYPYWHGERTDDHEGSRIGFVHDLNRAILNGKPFMMMESSPSSTNWQPVAKLRRPGMHVLSSLQAVAHGSDTVQYFQWRKSRGSSEKFHGAVVDHCGHENTRVFRDVTKVGEILSKLDDVIGTSVEPQVAVIYDWENYWAINDAQGPRIEQKDYFETCQKHYKAFWDMSIPTDVINMDCDFSKYKVVVAPMLYMVRPGVGERLEEFVKNGGTLVTTYWSGIVDENDLCFLGGFPGPLKKVTGIWAEELDALYDEDVNYVSVEEGNSLGMKGEYEARIFCDLIHSEGAEVLATYKTDFYKGMPALTCNNFGEGQAYYIAFRNNDEFLSDFYSSLAKKLTLKRAIEIDLPKGINAQVRMDEKNEFVFFMNFSSEEKTIDIKDLDLTDMVTGEKVAKEMEIEPYGVRIVRRK.

Arg-118 contacts substrate. Residue Cys-122 coordinates Zn(2+). Asn-156 provides a ligand contact to substrate. Glu-157 serves as the catalytic Proton donor. Residues Cys-162, Cys-164, and Cys-167 each contribute to the Zn(2+) site. Residue Glu-318 is the Nucleophile of the active site. Residues Trp-326 and 366-369 (EKFH) contribute to the substrate site.

Belongs to the glycosyl hydrolase 42 family.

The catalysed reaction is Hydrolysis of terminal non-reducing beta-D-galactose residues in beta-D-galactosides.. The polypeptide is Beta-galactosidase Pbg (Clostridium perfringens (strain ATCC 13124 / DSM 756 / JCM 1290 / NCIMB 6125 / NCTC 8237 / Type A)).